We begin with the raw amino-acid sequence, 246 residues long: Transcriptional regulatory protein LytR (246 aa).

Residues 2–116 (KALIIDDEPL…RIEQAVNKVR (115 aa)) form the Response regulatory domain. 4-aspartylphosphate is present on Asp53. Residues 141–245 (LPVEIDDKIH…MKDFKASIGL (105 aa)) form the HTH LytTR-type domain.

As to quaternary structure, homodimer; when phosphorylated. Post-translationally, phosphorylated and dephosphorylated by LytS.

It localises to the cytoplasm. Member of the two-component regulatory system LytR/LytS that regulates genes involved in autolysis, programmed cell death, biofilm formation and cell wall metabolism. Also participates in sensing and responding to host defense cationic antimicrobial peptides (HDPs). Upon phosphorylation by LytS, functions as a transcription regulator by direct binding to promoter regions of target genes including lrgA and lrgB, to positively regulate their expression. This Staphylococcus aureus (strain MW2) protein is Transcriptional regulatory protein LytR (lytR).